The sequence spans 335 residues: Tetraacyldisaccharide 4'-kinase (335 aa).

58–65 (TVGGVGKT) is an ATP binding site.

Belongs to the LpxK family.

It carries out the reaction a lipid A disaccharide + ATP = a lipid IVA + ADP + H(+). It functions in the pathway glycolipid biosynthesis; lipid IV(A) biosynthesis; lipid IV(A) from (3R)-3-hydroxytetradecanoyl-[acyl-carrier-protein] and UDP-N-acetyl-alpha-D-glucosamine: step 6/6. Its function is as follows. Transfers the gamma-phosphate of ATP to the 4'-position of a tetraacyldisaccharide 1-phosphate intermediate (termed DS-1-P) to form tetraacyldisaccharide 1,4'-bis-phosphate (lipid IVA). The sequence is that of Tetraacyldisaccharide 4'-kinase from Caulobacter sp. (strain K31).